Here is a 223-residue protein sequence, read N- to C-terminus: Cytidylate kinase (223 aa).

ATP is bound at residue 12 to 20; that stretch reads GPAGSGKST.

Belongs to the cytidylate kinase family. Type 1 subfamily.

The protein localises to the cytoplasm. The catalysed reaction is CMP + ATP = CDP + ADP. It carries out the reaction dCMP + ATP = dCDP + ADP. The polypeptide is Cytidylate kinase (Onion yellows phytoplasma (strain OY-M)).